A 339-amino-acid polypeptide reads, in one-letter code: Phomopsene synthase (339 aa).

5 residues coordinate Mg(2+): Asp-89, Asp-94, Asn-224, Ser-228, and Glu-232.

This sequence belongs to the terpene synthase family. Requires Mg(2+) as cofactor.

It catalyses the reaction (2E,6E,10E)-geranylgeranyl diphosphate = phomopsene + diphosphate. It carries out the reaction (2E,6E,10E)-geranylgeranyl diphosphate = allokutznerene + diphosphate. The protein operates within secondary metabolite biosynthesis; terpenoid biosynthesis. Functionally, diterpene synthase that catalyzes the conversion of geranylgeranyl diphosphate (GGPP) to phomopsene, a diterpene previously reported from the fungus P.amygdali. Phomopsene is the main product, but the enzyme can also produce allokutznerene (about 50% of phomopsene production activity) and traces of spiroviolene. Cannot use geranyl diphosphate (GPP), farnesyl diphosphate (FPP) and geranylfarnesyl diphosphate (GFPP). The chain is Phomopsene synthase from Allokutzneria albata (Kibdelosporangium albatum).